The chain runs to 473 residues: Spliceosome-associated protein CWC27 homolog (473 aa).

At serine 2 the chain carries N-acetylserine. Residues 11–166 enclose the PPIase cyclophilin-type domain; it reads TNGKVLLKTT…NPHKIKSCEV (156 aa). Residues 177–193 show a composition bias toward basic and acidic residues; it reads REIKRPKKEKPEEEVKK. 2 disordered regions span residues 177–386 and 399–473; these read REIK…EDQT and QAIA…KERR. Residues 206-230 are a coiled coil; the sequence is SFGEEAEEEEEEVNRVSQSMKGKSK. A compositionally biased stretch (basic and acidic residues) spans 231–241; that stretch reads SSHDLLKDDPH. A compositionally biased stretch (acidic residues) spans 257-266; sequence GDLDDGGEGE. 3 stretches are compositionally biased toward basic and acidic residues: residues 267 to 287, 305 to 348, and 360 to 372; these read SAEHDEYIDGDEKNLMRERIA, EVEK…KRSE, and EYRREKQKYEALR. A coiled-coil region spans residues 305–378; it reads EVEKKSVNRS…EALRKQQSKK (74 aa). Serine 347 is modified (phosphoserine). A compositionally biased stretch (acidic residues) spans 405 to 419; the sequence is PENDIPETEVEDDEG. Composition is skewed to basic and acidic residues over residues 426-438 and 458-473; these read QFEDKSRKVKDAS and RREESKKLMREKKERR.

The protein belongs to the cyclophilin-type PPIase family. As to quaternary structure, part of the activated spliceosome B/catalytic step 1 spliceosome, one of the forms of the spliceosome which has a well-formed active site but still cannot catalyze the branching reaction and is composed at least of 52 proteins, the U2, U5 and U6 snRNAs and the pre-mRNA. Recruited during early steps of activated spliceosome B maturation, it is probably one of the first proteins released from this complex as he matures to the spliceosome C complex. Component of the minor spliceosome, which splices U12-type introns.

It localises to the nucleus. Functionally, as part of the spliceosome, plays a role in pre-mRNA splicing. Probable inactive PPIase with no peptidyl-prolyl cis-trans isomerase activity. As a component of the minor spliceosome, involved in the splicing of U12-type introns in pre-mRNAs. In Pongo abelii (Sumatran orangutan), this protein is Spliceosome-associated protein CWC27 homolog.